Reading from the N-terminus, the 77-residue chain is Translation initiation factor IF-1, chloroplastic (77 aa).

One can recognise an S1-like domain in the interval Met1 to Arg71.

This sequence belongs to the IF-1 family. Component of the 30S ribosomal translation pre-initiation complex which assembles on the 30S ribosome in the order IF-2 and IF-3, IF-1 and N-formylmethionyl-tRNA(fMet); mRNA recruitment can occur at any time during PIC assembly.

It is found in the plastid. Its subcellular location is the chloroplast. Its function is as follows. One of the essential components for the initiation of protein synthesis. Stabilizes the binding of IF-2 and IF-3 on the 30S subunit to which N-formylmethionyl-tRNA(fMet) subsequently binds. Helps modulate mRNA selection, yielding the 30S pre-initiation complex (PIC). Upon addition of the 50S ribosomal subunit IF-1, IF-2 and IF-3 are released leaving the mature 70S translation initiation complex. The chain is Translation initiation factor IF-1, chloroplastic from Nandina domestica (Heavenly bamboo).